The sequence spans 197 residues: Ribosomal RNA large subunit methyltransferase E (197 aa).

5 residues coordinate S-adenosyl-L-methionine: Gly50, Trp52, Asp67, Asp83, and Asp111. The Proton acceptor role is filled by Lys151.

This sequence belongs to the class I-like SAM-binding methyltransferase superfamily. RNA methyltransferase RlmE family.

It is found in the cytoplasm. The enzyme catalyses uridine(2552) in 23S rRNA + S-adenosyl-L-methionine = 2'-O-methyluridine(2552) in 23S rRNA + S-adenosyl-L-homocysteine + H(+). Specifically methylates the uridine in position 2552 of 23S rRNA at the 2'-O position of the ribose in the fully assembled 50S ribosomal subunit. This chain is Ribosomal RNA large subunit methyltransferase E, found in Thermoplasma volcanium (strain ATCC 51530 / DSM 4299 / JCM 9571 / NBRC 15438 / GSS1).